The chain runs to 152 residues: Protein SprT-like (152 aa).

Residues 9–149 form the SprT-like domain; that stretch reads LQKLTETISL…CGKCNGKLKE (141 aa). Residue histidine 70 participates in Zn(2+) binding. Residue glutamate 71 is part of the active site. Residue histidine 74 coordinates Zn(2+).

The protein belongs to the SprT family. The cofactor is Zn(2+).

It is found in the cytoplasm. This chain is Protein SprT-like, found in Staphylococcus saprophyticus subsp. saprophyticus (strain ATCC 15305 / DSM 20229 / NCIMB 8711 / NCTC 7292 / S-41).